We begin with the raw amino-acid sequence, 218 residues long: Pyridoxine/pyridoxamine 5'-phosphate oxidase (218 aa).

Residues 14 to 17 and Lys-72 each bind substrate; that span reads RREY. FMN contacts are provided by residues 67–72, 82–83, Arg-88, Lys-89, and Gln-111; these read RIVLLK and YT. Substrate-binding residues include Tyr-129, Arg-133, and Ser-137. FMN is bound by residues 146–147 and Trp-191; that span reads QS. Residue 197-199 participates in substrate binding; sequence RLH. Arg-201 contacts FMN.

It belongs to the pyridoxamine 5'-phosphate oxidase family. As to quaternary structure, homodimer. The cofactor is FMN.

It carries out the reaction pyridoxamine 5'-phosphate + O2 + H2O = pyridoxal 5'-phosphate + H2O2 + NH4(+). It catalyses the reaction pyridoxine 5'-phosphate + O2 = pyridoxal 5'-phosphate + H2O2. The protein operates within cofactor metabolism; pyridoxal 5'-phosphate salvage; pyridoxal 5'-phosphate from pyridoxamine 5'-phosphate: step 1/1. It functions in the pathway cofactor metabolism; pyridoxal 5'-phosphate salvage; pyridoxal 5'-phosphate from pyridoxine 5'-phosphate: step 1/1. Catalyzes the oxidation of either pyridoxine 5'-phosphate (PNP) or pyridoxamine 5'-phosphate (PMP) into pyridoxal 5'-phosphate (PLP). This is Pyridoxine/pyridoxamine 5'-phosphate oxidase from Citrobacter koseri (strain ATCC BAA-895 / CDC 4225-83 / SGSC4696).